Reading from the N-terminus, the 189-residue chain is Tumor protein p53-inducible protein 11 (189 aa).

Over 1 to 63 (MAAKQPPPLM…FAVREPLGLR (63 aa)) the chain is Cytoplasmic. A Phosphoserine modification is found at serine 14. Residues 64-84 (VWQFLSAMLFSSVAIMALALP) form a helical membrane-spanning segment. Residues 85 to 108 (DQLYDAVFDGAEVTSKTPIRLYGG) are Extracellular-facing. Residues 109–129 (ALLSISLIMWNALYTAEKVII) traverse the membrane as a helical segment. Position 130 (arginine 130) is a topological domain, cytoplasmic. A helical membrane pass occupies residues 131-151 (WTLLTEACYFGVQSLVVTATL). The Extracellular portion of the chain corresponds to 152 to 155 (AETG). Residues 156-176 (LMSLGTLLLLASRLLFVIVSI) traverse the membrane as a helical segment. Residues 177–189 (YYYYQVGRKPKKV) are Cytoplasmic-facing.

It is found in the membrane. The sequence is that of Tumor protein p53-inducible protein 11 (Tp53i11) from Rattus norvegicus (Rat).